Consider the following 96-residue polypeptide: Large ribosomal subunit protein uL23 (96 aa).

It belongs to the universal ribosomal protein uL23 family. Part of the 50S ribosomal subunit. Contacts protein L29, and trigger factor when it is bound to the ribosome.

In terms of biological role, one of the early assembly proteins it binds 23S rRNA. One of the proteins that surrounds the polypeptide exit tunnel on the outside of the ribosome. Forms the main docking site for trigger factor binding to the ribosome. This is Large ribosomal subunit protein uL23 from Enterococcus faecalis (strain ATCC 700802 / V583).